The sequence spans 592 residues: Methionine--tRNA ligase (592 aa).

The 'HIGH' region signature appears at 12 to 22; that stretch reads PYANGPFHVGH. The Zn(2+) site is built by C144, C147, C157, and C160. The short motif at 342 to 346 is the 'KMSKS' region element; it reads KMSTS. ATP is bound at residue T345.

It belongs to the class-I aminoacyl-tRNA synthetase family. MetG type 1 subfamily. As to quaternary structure, monomer. The cofactor is Zn(2+).

It is found in the cytoplasm. It catalyses the reaction tRNA(Met) + L-methionine + ATP = L-methionyl-tRNA(Met) + AMP + diphosphate. Its function is as follows. Is required not only for elongation of protein synthesis but also for the initiation of all mRNA translation through initiator tRNA(fMet) aminoacylation. The polypeptide is Methionine--tRNA ligase (Roseiflexus sp. (strain RS-1)).